Consider the following 79-residue polypeptide: uncharacterized protein (79 aa).

Residues 1 to 19 form the signal peptide; sequence MKYVALAFVLSLVILQISA.

As to expression, nacreous layer of shell (at protein level). Expressed primarily in the mantle with highest level in the mantle pallium and lower level in the mantle edge.

The protein localises to the secreted. This is an uncharacterized protein from Pinctada maxima (Silver-lipped pearl oyster).